Reading from the N-terminus, the 254-residue chain is uncharacterized protein (254 aa).

Positions 66 to 111 form a coiled coil; sequence DMVSEMNKRMDDLAARIVVLEDEKAELRRINQRLTEKVRDKDMEKA.

This is an uncharacterized protein from Ostreid herpesvirus 1 (isolate France) (OsHV-1).